A 354-amino-acid polypeptide reads, in one-letter code: MEAALAVTRLPPNDPRTPALSVVDMHTGGEPLRIVHAGCPEVAGPTLLAKRRYMRQHLDYIRRRLVFEPRGHRDMYGAILVPSELPDAHLGVLFLHNEGYSSMCGHAVLALGRFALDFGLVPAPPKGAREAQVNIHCPCGLVTAFVECEGGRSCGPVRFHSVPAFVLASDLTVDVPGHGKVLVDIAYGGAFYAFVSAEKLGLDVCSAKTRDLVDAASALTGAVKAQFKINHPESEDLGFLYGSILTDGKDAYSEEATTNICVFADEQVDRSPTGSGVTARIALQYHKGLLQLNQTRAFKSSATGSVFTGCAVREAKCGDFKAVIVEVAGQAHYTGTANLTVEDGDPLRDGFLLK.

Cys104 functions as the Proton acceptor in the catalytic mechanism. Residues Gly105–His106, Asp269, and Gly274–Ser275 each bind substrate.

Belongs to the proline racemase family. Homodimer.

It carries out the reaction trans-3-hydroxy-L-proline = 1-pyrroline-2-carboxylate + H2O. Its function is as follows. Catalyzes the dehydration of trans-3-hydroxy-L-proline to delta-1-pyrroline-2-carboxylate (Pyr2C). In Mus musculus (Mouse), this protein is Trans-L-3-hydroxyproline dehydratase (L3hypdh).